The primary structure comprises 331 residues: Polysaccharide lyase (331 aa).

The signal sequence occupies residues 1 to 22 (MSLPLRLALLPTLLASASAFAA). Residue Cys23 is the site of N-palmitoyl cysteine attachment. The S-diacylglycerol cysteine moiety is linked to residue Cys23.

Belongs to the polysaccharide lyase 5 family.

Its subcellular location is the cell outer membrane. It catalyses the reaction Eliminative cleavage of alginate to give oligosaccharides with 4-deoxy-alpha-L-erythro-hex-4-enuronosyl groups at their non-reducing ends and beta-D-mannuronate at their reducing end.. The enzyme catalyses [hyaluronan](n) = n 3-(4-deoxy-beta-D-gluc-4-enuronosyl)-N-acetyl-D-glucosamine + H2O. It carries out the reaction Eliminative cleavage of (1-&gt;4)-beta-D-glucuronans to give oligosaccharides with 4-deoxy-beta-D-gluc-4-enuronosyl groups at their non-reducing ends. Complete degradation of glucuronans results in the formation of tetrasaccharides.. Its activity is regulated as follows. Is inhibited by mono- and divalent cations as well as L-ascorbic acid 6-hexadecanoate. Its function is as follows. Polysaccharide lyase that catalyzes the depolymerization of several anionic polysaccharides via a beta-elimination mechanism. Exhibits broad substrate specificity, catalyzing the degradation of not only alginate and poly-beta-D-mannuronate (poly-ManA), but poly-beta-D-glucuronate (poly-GlcA or poly-GlcUA) and hyaluronate (HA) as well. The oligosaccharide products formed by enzymatic cleavage are comprised mainly of disaccharides, with a lower abundance of trimers and pentamers. Is not active on poly-D-galacturonate, heparin and heparin sulfate. This is Polysaccharide lyase from Stenotrophomonas maltophilia (strain K279a).